The primary structure comprises 167 residues: Large ribosomal subunit protein uL10 (167 aa).

Belongs to the universal ribosomal protein uL10 family. As to quaternary structure, part of the ribosomal stalk of the 50S ribosomal subunit. The N-terminus interacts with L11 and the large rRNA to form the base of the stalk. The C-terminus forms an elongated spine to which L12 dimers bind in a sequential fashion forming a multimeric L10(L12)X complex.

In terms of biological role, forms part of the ribosomal stalk, playing a central role in the interaction of the ribosome with GTP-bound translation factors. The chain is Large ribosomal subunit protein uL10 from Ligilactobacillus salivarius (strain UCC118) (Lactobacillus salivarius).